The primary structure comprises 460 residues: Probable Xaa-Pro aminopeptidase VDBG_02538 (460 aa).

Residues Asp-256, Asp-267, Glu-390, and Glu-430 each contribute to the Mn(2+) site.

The protein belongs to the peptidase M24B family. Mn(2+) is required as a cofactor.

The catalysed reaction is Release of any N-terminal amino acid, including proline, that is linked to proline, even from a dipeptide or tripeptide.. Catalyzes the removal of a penultimate prolyl residue from the N-termini of peptides. This Verticillium alfalfae (strain VaMs.102 / ATCC MYA-4576 / FGSC 10136) (Verticillium wilt of alfalfa) protein is Probable Xaa-Pro aminopeptidase VDBG_02538.